Consider the following 1070-residue polypeptide: DNA-directed RNA polymerase subunit beta (1070 aa).

The protein belongs to the RNA polymerase beta chain family. In plastids the minimal PEP RNA polymerase catalytic core is composed of four subunits: alpha, beta, beta', and beta''. When a (nuclear-encoded) sigma factor is associated with the core the holoenzyme is formed, which can initiate transcription.

The protein resides in the plastid. The protein localises to the chloroplast. It catalyses the reaction RNA(n) + a ribonucleoside 5'-triphosphate = RNA(n+1) + diphosphate. In terms of biological role, DNA-dependent RNA polymerase catalyzes the transcription of DNA into RNA using the four ribonucleoside triphosphates as substrates. The chain is DNA-directed RNA polymerase subunit beta from Nicotiana tomentosiformis (Tobacco).